The chain runs to 282 residues: NADPH-dependent 7-cyano-7-deazaguanine reductase (282 aa).

82–84 (IES) contacts substrate. Residue 84–85 (SK) participates in NADPH binding. The active-site Thioimide intermediate is the cysteine 189. Catalysis depends on aspartate 196, which acts as the Proton donor. A substrate-binding site is contributed by 228-229 (HE). Residue 257 to 258 (RG) coordinates NADPH.

Belongs to the GTP cyclohydrolase I family. QueF type 2 subfamily. Homodimer.

Its subcellular location is the cytoplasm. The catalysed reaction is 7-aminomethyl-7-carbaguanine + 2 NADP(+) = 7-cyano-7-deazaguanine + 2 NADPH + 3 H(+). Its pathway is tRNA modification; tRNA-queuosine biosynthesis. Its function is as follows. Catalyzes the NADPH-dependent reduction of 7-cyano-7-deazaguanine (preQ0) to 7-aminomethyl-7-deazaguanine (preQ1). This Delftia acidovorans (strain DSM 14801 / SPH-1) protein is NADPH-dependent 7-cyano-7-deazaguanine reductase.